The chain runs to 540 residues: L-aspartate oxidase (540 aa).

Residues 16–19 (SGAA), Lys38, 45–52 (STFYAQGG), 161–162 (NA), and Asp223 each bind FAD. Succinate is bound by residues His244 and 259–260 (TE). Arg290 serves as the catalytic Proton donor/acceptor. Glu375 lines the FAD pocket. Ser389 lines the succinate pocket. 391–392 (SL) is a binding site for FAD.

It belongs to the FAD-dependent oxidoreductase 2 family. NadB subfamily. As to quaternary structure, monomer. Homodimer. Both the monomeric and dimeric forms of the enzyme are catalytically active. FAD is required as a cofactor.

It localises to the cytoplasm. The enzyme catalyses L-aspartate + O2 = iminosuccinate + H2O2. It carries out the reaction fumarate + L-aspartate = iminosuccinate + succinate. The protein operates within cofactor biosynthesis; NAD(+) biosynthesis; iminoaspartate from L-aspartate (oxidase route): step 1/1. With respect to regulation, inhibited by the product iminoaspartate. Competitively inhibited by mesotartrate. NAD acts as a competitive inhibitor to FAD. Inhibited by iodoacetic acid, diethylpyrocarbonate and tetranitromethane. In terms of biological role, catalyzes the oxidation of L-aspartate to iminoaspartate, the first step in the de novo biosynthesis of NAD(+). Can use either oxygen or fumarate as electron acceptors, which allows the enzyme to be functional under aerobic and anaerobic conditions. In vivo, fumarate is used under anaerobic conditions, and oxygen is the predominant electron acceptor under aerobic conditions due to the lower fumarate levels. In vitro, fumarate is a more efficient electron acceptor and is kinetically superior to oxygen. The chain is L-aspartate oxidase from Escherichia coli (strain K12).